Here is a 651-residue protein sequence, read N- to C-terminus: Transcription factor E2-alpha (651 aa).

Disordered stretches follow at residues Ala-32–Asn-107, Leu-131–Ser-208, and Asp-341–Pro-378. 3 stretches are compositionally biased toward low complexity: residues Ser-56 to Ser-73, Leu-131 to Ser-148, and Asp-341 to Pro-354. Ser-135 and Ser-140 each carry phosphoserine. Position 353 is a phosphothreonine (Thr-353). Ser-357 carries the post-translational modification Phosphoserine. Arg-369 is subject to Omega-N-methylarginine. Ser-377 is subject to Phosphoserine. The tract at residues Leu-387 to Leu-422 is leucine-zipper. Positions His-457–Val-549 are disordered. Positions Ser-461–Ser-479 are enriched in low complexity. Lys-496 participates in a covalent cross-link: Glycyl lysine isopeptide (Lys-Gly) (interchain with G-Cter in SUMO2). The residue at position 526 (Ser-526) is a Phosphoserine. Asp-528 bears the Phosphothreonine mark. Asp-533 carries the post-translational modification Phosphoserine. A compositionally biased stretch (basic and acidic residues) spans Gln-539–Val-549. A bHLH domain is found at Glu-546–Leu-599. Residue Lys-622 forms a Glycyl lysine isopeptide (Lys-Gly) (interchain with G-Cter in SUMO2) linkage.

As to quaternary structure, homodimer. Heterodimer; efficient DNA binding requires dimerization with another bHLH protein. Forms a heterodimer with TWIST1 and TWIST2. Forms a heterodimer with NEUROD1; the heterodimer is inhibited in presence of ID2, but not NR0B2, to E-box element. Forms a heterodimer with TCF15; the heterodimer binds E-box element. Forms a heterodimer with MYOG; heterodimerization enhances MYOG DNA-binding and transcriptional activities. Forms a heterodimer with ATOH8; repress transcription of TCF3 and TCF3-NEUROG3 dimer-induced transactivation of E box-dependent promoters. Component of a nuclear TAL-1 complex composed at least of CBFA2T3, LDB1, TAL1 and TCF3. Interacts with NEUROD2. Interacts with EP300. Interacts with PTF1A, TGFB1I1 and UBE2I. Interacts with BHLHA9. Interacts with ASB2; the interaction is mediated by SKP2 and targets TCF3 for Notch-induced proteasomal degradation. Interacts with transcription factor ASCL5/AmeloD. Forms a heterodimer with ATOH7; required for ATOH7 DNA-binding. In terms of assembly, interacts with RALGAPA1. Interacts with FIGLA. Post-translationally, phosphorylated following NGF stimulation. Undergoes Notch-induced ubiquitination and subsequent proteasomal degradation which is mediated by ASB1 or ASB2, the substrate-recognition components of probable ECS E3 ubiquitin-protein ligase complexes.

It localises to the nucleus. Transcriptional regulator involved in the initiation of neuronal differentiation and mesenchymal to epithelial transition. Heterodimers between TCF3 and tissue-specific basic helix-loop-helix (bHLH) proteins play major roles in determining tissue-specific cell fate during embryogenesis, like muscle or early B-cell differentiation. Together with TCF15, required for the mesenchymal to epithelial transition. Dimers bind DNA on E-box motifs: 5'-CANNTG-3'. Binds to the kappa-E2 site in the kappa immunoglobulin gene enhancer. Binds to IEB1 and IEB2, which are short DNA sequences in the insulin gene transcription control region. Functionally, facilitates ATOH7 binding to DNA at the consensus sequence 5'-CAGGTG-3', and positively regulates transcriptional activity. The chain is Transcription factor E2-alpha (Tcf3) from Mus musculus (Mouse).